Consider the following 946-residue polypeptide: Histone-lysine N-methyltransferase, H3 lysine-79 specific (946 aa).

Residues 1 to 18 (MSEADAGARDESPSRTAE) are compositionally biased toward basic and acidic residues. The tract at residues 1 to 28 (MSEADAGARDESPSRTAEEPAAAMRIKE) is disordered. Positions 54 to 369 (QGKTLRLPGN…KLIKYYEDQR (316 aa)) constitute a DOT1 domain. Residues 173 to 176 (YGET), 196 to 205 (FVDLGSGIGQ), Glu-223, and 259 to 260 (DF) each bind S-adenosyl-L-methionine. Over residues 368 to 409 (QRRRQEVKSSREGSEISDGRDMGLKKRKSQRESSVHPDKLQK) the composition is skewed to basic and acidic residues. Disordered stretches follow at residues 368 to 577 (QRRR…HGGG) and 849 to 905 (PTAS…GATE). Positions 410–422 (TEQAAASSHQSPK) are enriched in polar residues. Basic and acidic residues predominate over residues 464 to 484 (GKDREKEKEKKKNKIYEEKKV). 3 stretches are compositionally biased toward low complexity: residues 491 to 502 (KSSSSRYSSETP), 512 to 528 (NSIS…QPKA), and 855 to 864 (SKVSPSSSSS). Over residues 880 to 903 (GAGGGGKRGTSGGRKSDGGGGGGA) the composition is skewed to gly residues.

It belongs to the class I-like SAM-binding methyltransferase superfamily. DOT1 family. In terms of assembly, interacts with zfp-1 (via C-terminus) to form a heterodimer known as the zfp-1-dot-1.1 complex or DotCom complex.

The protein resides in the nucleus. Its subcellular location is the chromosome. It carries out the reaction L-lysyl(79)-[histone H3] + 3 S-adenosyl-L-methionine = N(6),N(6),N(6)-trimethyl-L-lysyl(79)-[histone H3] + 3 S-adenosyl-L-homocysteine + 3 H(+). Its function is as follows. Histone methyltransferase, which in complex with zfp-1, methylates 'Lys-79' of histone H3 to activate transcription. During stress, the zfp-1-dot-1.1 complex also plays a role in the deubiquitination of histone H2B sites, which negatively modulates the RNA polymerase II-induced transcription of highly expressed genes. Involved in controlling tissue-specific gene expression, particularly in the epidermis. The chain is Histone-lysine N-methyltransferase, H3 lysine-79 specific from Caenorhabditis elegans.